The primary structure comprises 262 residues: 2-oxo-tetronate isomerase (262 aa).

The Proton donor/acceptor role is filled by Glu143. The Mg(2+) site is built by Glu143, Asp178, Gln204, and Glu240. The Proton donor/acceptor role is filled by Glu240.

The protein belongs to the hyi family. OtnI subfamily.

The enzyme catalyses 2-dehydro-L-erythronate = 3-dehydro-L-erythronate. It catalyses the reaction 2-dehydro-D-erythronate = 3-dehydro-D-erythronate. Catalyzes the isomerization of 2-oxo-tetronate to 3-oxo-tetronate. The polypeptide is 2-oxo-tetronate isomerase (Pectobacterium atrosepticum (strain SCRI 1043 / ATCC BAA-672) (Erwinia carotovora subsp. atroseptica)).